Consider the following 827-residue polypeptide: Zinc finger protein 438 (827 aa).

Disordered regions lie at residues 1–31 (MQNS…LQNK), 117–173 (LKLP…LYKP), and 193–232 (ALTN…AKQD). Polar residues-rich tracts occupy residues 16–31 (NIPS…LQNK) and 150–159 (PAQTQMCPQM). The span at 217–226 (PATPASPTPE) shows a compositional bias: pro residues. 3 consecutive C2H2-type zinc fingers follow at residues 506-528 (HRCH…MNTH), 534-556 (YSCR…MKLH), and 566-589 (MCCE…KEVH). Residues 682-723 (FPGSKGTQEELVQHASHDWKRHPERGKPEKVHSSSEESHACP) form a disordered region. Composition is skewed to basic and acidic residues over residues 688–699 (TQEELVQHASHD) and 706–721 (RGKP…ESHA). Residues 775–798 (FNCLLCAEMLGQKEDLLHHWKHQH) form a C2H2-type 4 zinc finger.

Its subcellular location is the nucleus. Acts as a transcriptional repressor. In Pongo abelii (Sumatran orangutan), this protein is Zinc finger protein 438 (ZNF438).